The primary structure comprises 659 residues: Checkpoint protein RAD24 (659 aa).

Residues 24-54 are disordered; it reads TKWSSSRPTSPVRKARSTENDFLSKQDTSSI. 109–116 serves as a coordination point for ATP; the sequence is GPSGCSKS. The segment covering 596 to 612 has biased composition (acidic residues); that stretch reads EDEETSFNDDPIVDSDS. A disordered region spans residues 596–659; it reads EDEETSFNDD…SLSDSDLEIL (64 aa). Phosphoserine occurs at positions 652 and 654.

It belongs to the rad17/RAD24 family. As to quaternary structure, component of the RAD24-RFC complex which consists of RAD14, RFC2, RFC3, RFC4 and RFC5 and associates with the checkpoint clamp DDC1:MEC3:RAD17 complex. RAD24 interacts with ECO1.

It localises to the nucleus. Functionally, participates in checkpoint pathways arrest of the cell cycle, a mechanism that allows the DNA repair pathways to act to restore the integrity of the DNA prior to DNA synthesis or separation of the replicated chromosomes. Regulates the DNA damage checkpoint pathway throughout the cell cycle, when associated with RCF5. Component of the RFC-like RAD24-RFC complex which loads the checkpoint clamp DDC1:MEC3:RAD17 complex and is involved in DNA repair pathways. During a clamp loading circle, the RFC:clamp complex binds to DNA and the recognition of the double-stranded/single-stranded junction stimulates ATP hydrolysis by RFC. The complex presumably provides bipartite ATP sites in which one subunit supplies a catalytic site for hydrolysis of ATP bound to the neighboring subunit. Dissociation of RFC from the clamp leaves the clamp encircling DNA. The chain is Checkpoint protein RAD24 (RAD24) from Saccharomyces cerevisiae (strain ATCC 204508 / S288c) (Baker's yeast).